A 1711-amino-acid chain; its full sequence is Reverse gyrase (1711 aa).

Residues 1–39 form an RG N-terminal-type zinc finger; sequence MKAVYREMCPNCWGRISDERLVMRNPCEECLDEPVHADS. C9, C12, C27, and C30 together coordinate Zn(2+). ATP is bound by residues Q89 and 106–113; that span reads APTGMGKS. The 164-residue stretch at 93-256 folds into the Helicase ATP-binding domain; sequence VKRLLKGRSF…RLKKQMSRYL (164 aa). The DEAD box motif lies at 213 to 216; the sequence is DDVD. The interval 638–1711 is topoisomerase I; the sequence is DLVRSALMIV…YSEIQRYVSG (1074 aa). The Toprim domain maps to 642 to 805; the sequence is SALMIVESPN…NIKRIEFHEV (164 aa). E648 is a binding site for Mg(2+). Residues 722–751 form an RG C-terminal-type zinc finger; it reads LKRCRDCGHQFVDWEKKGVCPRCGSTNVRD. C725, C728, C741, and C744 together coordinate Zn(2+). Residue D774 coordinates Mg(2+). Residues 821 to 1709 form the Topo IA-type catalytic domain; sequence NENRVNAQIV…ELYSEIQRYV (889 aa). In terms of domain architecture, DOD-type homing endonuclease spans 1160-1287; the sequence is VFGLVLGDGT…LSVYLYQIGI (128 aa). Y1452 acts as the O-(5'-phospho-DNA)-tyrosine intermediate in catalysis.

In the N-terminal section; belongs to the DEAD box helicase family. DDVD subfamily. It in the C-terminal section; belongs to the type IA topoisomerase family. As to quaternary structure, monomer. Zn(2+) serves as cofactor. Mg(2+) is required as a cofactor. Post-translationally, this protein undergoes a protein self splicing that involves a post-translational excision of the intervening region (intein) followed by peptide ligation.

Its subcellular location is the cytoplasm. It carries out the reaction ATP + H2O = ADP + phosphate + H(+). Its function is as follows. Modifies the topological state of DNA by introducing positive supercoils in an ATP-dependent process, increasing the linking number in steps of +1. Binds to single-stranded DNA, transiently cleaves and then rejoins the ends, introducing a positive supercoil in the process. The scissile phosphodiester is attacked by the catalytic tyrosine of the enzyme, resulting in the formation of a DNA-(5'-phosphotyrosyl)-enzyme intermediate. Probably involved in rewinding DNA strands in regions of the chromosome that have opened up to allow replication, transcription, DNA repair and/or for DNA protection. In Thermococcus kodakarensis (strain ATCC BAA-918 / JCM 12380 / KOD1) (Pyrococcus kodakaraensis (strain KOD1)), this protein is Reverse gyrase.